Reading from the N-terminus, the 518-residue chain is Phenylacetate 2-hydroxylase (518 aa).

A heme-binding site is contributed by Cys437.

The protein belongs to the cytochrome P450 family.

The catalysed reaction is 2-phenylacetate + reduced [NADPH--hemoprotein reductase] + O2 = (2-hydroxyphenyl)acetate + oxidized [NADPH--hemoprotein reductase] + H2O + H(+). It participates in aromatic compound metabolism; phenylacetate degradation. In terms of biological role, catalyzes the hydroxylation of phenylacetate to 2-hydroxyphenylacetate in the homogentisate pathway. The homogentisate pathway is used to catabolize phenylacetate and use it as a carbon source. Can also catalyze the hydroxylation of 3-hydroxyphenylacetate to 2,5-dihydroxyphenylacetate (homogentisate) at low efficiency. In Emericella nidulans (Aspergillus nidulans), this protein is Phenylacetate 2-hydroxylase (phacA).